The following is a 26-amino-acid chain: Delta-hemolysin (26 aa).

M1 is modified (N-formylmethionine).

This sequence belongs to the delta-lysin family.

The protein resides in the secreted. The protein localises to the host cell membrane. In terms of biological role, lyses erythrocytes and many other mammalian cells. The chain is Delta-hemolysin (hld) from Staphylococcus aureus (strain MSSA476).